We begin with the raw amino-acid sequence, 117 residues long: Large ribosomal subunit protein uL18 (117 aa).

The protein belongs to the universal ribosomal protein uL18 family. In terms of assembly, part of the 50S ribosomal subunit; part of the 5S rRNA/L5/L18/L25 subcomplex. Contacts the 5S and 23S rRNAs.

Its function is as follows. This is one of the proteins that bind and probably mediate the attachment of the 5S RNA into the large ribosomal subunit, where it forms part of the central protuberance. The protein is Large ribosomal subunit protein uL18 of Klebsiella pneumoniae (strain 342).